The primary structure comprises 400 residues: MAIEKELLDQLLAGRDPSEVFGKDGLLDDLKKALSERILNAELDEHLDVERSEGTAANRRNGSSKKTVLTGTSKMTLTIPRDRAGTFDPKLIARYQRRFPDFDDKIISMYARGMTVREIQGHLEDIYGIDVSPDLISAVTDQVLEAVGEWQNRPLELCYPLVFFDAIRVKIRDEGFVRNKAVYVALAVLADGTKEILGLWIEQTEGAKFWLRVMNELKSRGCQDILIAVVDGLKGFPDAITAVFPQTIVQTCIVHLIRHSLEFVSYKDRKPVVPALRAIYRARDAEAGLKALEAFEEGYWGQKYPAISQSWRRNWEHVVPFFAFPEGVRRIIYTTNAIEALNSKLRRAVRSRGHFPGDEAAMKLLYLVLNNAAEQWKRAPREWVEAKTQFAVIFGERFFN.

The protein belongs to the transposase mutator family.

In terms of biological role, required for the transposition of the insertion element. The chain is Probable transposase for insertion sequence element ISRM3-like from Sinorhizobium fredii (strain NBRC 101917 / NGR234).